Consider the following 630-residue polypeptide: DNA mismatch repair protein MutL (630 aa).

Residues 398–408 show a composition bias toward polar residues; it reads TQTNAFGSMAT. A disordered region spans residues 398 to 425; that stretch reads TQTNAFGSMATSRDSSRGSYSASESRQR.

It belongs to the DNA mismatch repair MutL/HexB family.

Functionally, this protein is involved in the repair of mismatches in DNA. It is required for dam-dependent methyl-directed DNA mismatch repair. May act as a 'molecular matchmaker', a protein that promotes the formation of a stable complex between two or more DNA-binding proteins in an ATP-dependent manner without itself being part of a final effector complex. This chain is DNA mismatch repair protein MutL, found in Shewanella baltica (strain OS185).